Consider the following 118-residue polypeptide: Large ribosomal subunit protein eL18 (118 aa).

The protein belongs to the eukaryotic ribosomal protein eL18 family.

This is Large ribosomal subunit protein eL18 from Nanoarchaeum equitans (strain Kin4-M).